Here is a 302-residue protein sequence, read N- to C-terminus: Glycine--tRNA ligase alpha subunit (302 aa).

This sequence belongs to the class-II aminoacyl-tRNA synthetase family. In terms of assembly, tetramer of two alpha and two beta subunits.

Its subcellular location is the cytoplasm. It carries out the reaction tRNA(Gly) + glycine + ATP = glycyl-tRNA(Gly) + AMP + diphosphate. In Xanthomonas axonopodis pv. citri (strain 306), this protein is Glycine--tRNA ligase alpha subunit.